The following is a 166-amino-acid chain: MTRDFSKFEQNLTHLDSEGAVKMVDVSTKVQTIRQAEAAGQVRMLPETFEAIQRGNSPKGDVLGTAKLAGIMAAKQTAQLIPLCHPLPLQKIDIELIPDPHLPGYQIRAMVKTKAETGVEMEALTAVSVAALTLYDMAKALEKSISIELIRLLSKSGGKSGDYMVK.

Residues 83-85 (LCH) and 121-122 (ME) contribute to the substrate site. D136 is an active-site residue.

Belongs to the MoaC family. Homohexamer; trimer of dimers.

The catalysed reaction is (8S)-3',8-cyclo-7,8-dihydroguanosine 5'-triphosphate = cyclic pyranopterin phosphate + diphosphate. The protein operates within cofactor biosynthesis; molybdopterin biosynthesis. In terms of biological role, catalyzes the conversion of (8S)-3',8-cyclo-7,8-dihydroguanosine 5'-triphosphate to cyclic pyranopterin monophosphate (cPMP). The polypeptide is Cyclic pyranopterin monophosphate synthase (Trichodesmium erythraeum (strain IMS101)).